We begin with the raw amino-acid sequence, 274 residues long: tRNA-cytidine(32) 2-sulfurtransferase (274 aa).

The short motif at 40–45 is the PP-loop motif element; that stretch reads SGGKDS. [4Fe-4S] cluster contacts are provided by Cys-115, Cys-118, and Cys-206.

It belongs to the TtcA family. Homodimer. Mg(2+) is required as a cofactor. Requires [4Fe-4S] cluster as cofactor.

Its subcellular location is the cytoplasm. It carries out the reaction cytidine(32) in tRNA + S-sulfanyl-L-cysteinyl-[cysteine desulfurase] + AH2 + ATP = 2-thiocytidine(32) in tRNA + L-cysteinyl-[cysteine desulfurase] + A + AMP + diphosphate + H(+). It participates in tRNA modification. In terms of biological role, catalyzes the ATP-dependent 2-thiolation of cytidine in position 32 of tRNA, to form 2-thiocytidine (s(2)C32). The sulfur atoms are provided by the cysteine/cysteine desulfurase (IscS) system. This chain is tRNA-cytidine(32) 2-sulfurtransferase, found in Pseudomonas putida (strain ATCC 47054 / DSM 6125 / CFBP 8728 / NCIMB 11950 / KT2440).